The chain runs to 199 residues: Putative acetyltransferase SAR2635 (199 aa).

The protein belongs to the transferase hexapeptide repeat family.

The sequence is that of Putative acetyltransferase SAR2635 from Staphylococcus aureus (strain MRSA252).